Here is a 476-residue protein sequence, read N- to C-terminus: Adenosylhomocysteinase (476 aa).

3 residues coordinate substrate: Thr62, Asp141, and Glu201. Residue 202-204 participates in NAD(+) binding; it reads TTT. Positions 231 and 235 each coordinate substrate. NAD(+)-binding positions include Asn236, 265–270, Glu288, Asn323, 344–346, and Asn389; these read GYGDVG and IGH.

This sequence belongs to the adenosylhomocysteinase family. Requires NAD(+) as cofactor.

Its subcellular location is the cytoplasm. The enzyme catalyses S-adenosyl-L-homocysteine + H2O = L-homocysteine + adenosine. It functions in the pathway amino-acid biosynthesis; L-homocysteine biosynthesis; L-homocysteine from S-adenosyl-L-homocysteine: step 1/1. Functionally, may play a key role in the regulation of the intracellular concentration of adenosylhomocysteine. In Delftia acidovorans (strain DSM 14801 / SPH-1), this protein is Adenosylhomocysteinase.